Here is a 133-residue protein sequence, read N- to C-terminus: Small ribosomal subunit protein uS9 (133 aa).

Positions 98 to 113 are enriched in basic and acidic residues; that stretch reads RKPLKTEGHLSRDPRA. The segment at 98–133 is disordered; the sequence is RKPLKTEGHLSRDPRAKERRKYGLKKARKAPQFSKR. The segment covering 114–133 has biased composition (basic residues); sequence KERRKYGLKKARKAPQFSKR.

This sequence belongs to the universal ribosomal protein uS9 family.

This chain is Small ribosomal subunit protein uS9, found in Parasynechococcus marenigrum (strain WH8102).